The sequence spans 99 residues: Probable small ribosomal subunit protein cS23 (99 aa).

The protein belongs to the chloroplast-specific ribosomal protein cS23 family. As to quaternary structure, part of the 30S ribosomal subunit.

Functionally, probably a ribosomal protein or a ribosome-associated protein. This chain is Probable small ribosomal subunit protein cS23, found in Synechococcus sp. (strain JA-3-3Ab) (Cyanobacteria bacterium Yellowstone A-Prime).